Reading from the N-terminus, the 547-residue chain is TBCC domain-containing protein 1 (547 aa).

The 132-residue stretch at 304-435 (PHTHRMVVMS…LEDHMAQTGL (132 aa)) folds into the C-CAP/cofactor C-like domain.

The protein belongs to the TBCC family.

The protein localises to the cytoplasm. It localises to the cytoskeleton. Its subcellular location is the microtubule organizing center. It is found in the centrosome. The protein resides in the spindle pole. May play a role in the regulation of centrosome and Golgi apparatus positioning. The chain is TBCC domain-containing protein 1 (tbccd1) from Xenopus laevis (African clawed frog).